Reading from the N-terminus, the 95-residue chain is Protein RnfH (95 aa).

Belongs to the UPF0125 (RnfH) family.

The chain is Protein RnfH from Erwinia tasmaniensis (strain DSM 17950 / CFBP 7177 / CIP 109463 / NCPPB 4357 / Et1/99).